The primary structure comprises 632 residues: Galactan 5-O-arabinofuranosyltransferase (632 aa).

Helical transmembrane passes span 10–30 (QIVL…IAIA), 45–65 (ALTT…GGVW), 76–96 (LGGL…PLGA), 162–182 (WAIT…WQMI), 184–204 (FEYA…YSSP), 206–226 (PYAA…WSGL), 242–259 (GWAT…AATW), 263–282 (LLAY…ATAL), 298–318 (LAGI…PFLA), 344–364 (FPML…LWLI), 375–395 (ALMI…LTTL), 409–429 (LTVL…QSLA), and 434–454 (AVLS…SQDI). The Extracellular portion of the chain corresponds to 455–632 (PNVLRPDLTI…LAIRKPMGNA (178 aa)).

Belongs to the glycosyltransferase 85 family.

It localises to the cell membrane. The enzyme catalyses Adds an alpha-D-arabinofuranosyl group from trans,octacis-decaprenylphospho-beta-D-arabinofuranose at the 5-O-position of the eighth, tenth and twelfth galactofuranose unit of the galactofuranan chain of [beta-D-galactofuranosyl-(1-&gt;5)-beta-D-galactofuranosyl-(1-&gt;6)]14-beta-D-galactofuranosyl-(1-&gt;5)-beta-D-galactofuranosyl-(1-&gt;4)-alpha-L-rhamnopyranosyl-(1-&gt;3)-N-acetyl-alpha-D-glucosaminyl-diphospho-trans,octacis-decaprenol.. Its pathway is cell wall biogenesis; cell wall polysaccharide biosynthesis. Functionally, involved in the biosynthesis of the arabinogalactan (AG) region of the mycolylarabinogalactan-peptidoglycan (mAGP) complex, an essential component of the mycobacterial cell wall. Catalyzes the addition of the first key arabinofuranosyl (Araf) residue from the sugar donor decaprenyl-phospho-arabinose (DPA) on the C-5 of a 6-linked galactofuranosyl (Galf) of the galactan domain, thus 'priming' the galactan for further elaboration by other arabinofuranosyltransferases. The polypeptide is Galactan 5-O-arabinofuranosyltransferase (Mycobacterium leprae (strain TN)).